The chain runs to 396 residues: Elongation factor Tu (396 aa).

The tr-type G domain occupies 10 to 205 (KPHVNIGTIG…AVDESIPDPV (196 aa)). The interval 19–26 (GHVDHGKT) is G1. 19–26 (GHVDHGKT) lines the GTP pocket. Thr-26 contributes to the Mg(2+) binding site. The tract at residues 62-66 (GITIN) is G2. Residues 83 to 86 (DAPG) are G3. Residues 83-87 (DAPGH) and 138-141 (NKAD) each bind GTP. Residues 138 to 141 (NKAD) form a G4 region. Residues 175–177 (SAL) form a G5 region.

The protein belongs to the TRAFAC class translation factor GTPase superfamily. Classic translation factor GTPase family. EF-Tu/EF-1A subfamily. Monomer.

It is found in the cytoplasm. The enzyme catalyses GTP + H2O = GDP + phosphate + H(+). GTP hydrolase that promotes the GTP-dependent binding of aminoacyl-tRNA to the A-site of ribosomes during protein biosynthesis. This chain is Elongation factor Tu, found in Mycobacterium sp. (strain JLS).